The chain runs to 78 residues: ATP synthase subunit c (78 aa).

The next 2 helical transmembrane spans lie at 9 to 29 (AFIGAGLAMIAILGVGIGQGW) and 56 to 76 (AAVTETGALYCFIIAILLVFV).

It belongs to the ATPase C chain family. In terms of assembly, F-type ATPases have 2 components, F(1) - the catalytic core - and F(0) - the membrane proton channel. F(1) has five subunits: alpha(3), beta(3), gamma(1), delta(1), epsilon(1). F(0) has three main subunits: a(1), b(2) and c(10-14). The alpha and beta chains form an alternating ring which encloses part of the gamma chain. F(1) is attached to F(0) by a central stalk formed by the gamma and epsilon chains, while a peripheral stalk is formed by the delta and b chains.

It localises to the cell membrane. In terms of biological role, f(1)F(0) ATP synthase produces ATP from ADP in the presence of a proton or sodium gradient. F-type ATPases consist of two structural domains, F(1) containing the extramembraneous catalytic core and F(0) containing the membrane proton channel, linked together by a central stalk and a peripheral stalk. During catalysis, ATP synthesis in the catalytic domain of F(1) is coupled via a rotary mechanism of the central stalk subunits to proton translocation. Key component of the F(0) channel; it plays a direct role in translocation across the membrane. A homomeric c-ring of between 10-14 subunits forms the central stalk rotor element with the F(1) delta and epsilon subunits. In Malacoplasma penetrans (strain HF-2) (Mycoplasma penetrans), this protein is ATP synthase subunit c.